A 466-amino-acid polypeptide reads, in one-letter code: Asparagine--tRNA ligase (466 aa).

Belongs to the class-II aminoacyl-tRNA synthetase family. In terms of assembly, homodimer.

The protein localises to the cytoplasm. The catalysed reaction is tRNA(Asn) + L-asparagine + ATP = L-asparaginyl-tRNA(Asn) + AMP + diphosphate + H(+). The polypeptide is Asparagine--tRNA ligase (Syntrophobacter fumaroxidans (strain DSM 10017 / MPOB)).